The sequence spans 503 residues: Discoidin, CUB and LCCL domain-containing protein 1 (503 aa).

Residues 1-25 (MGTGAGGPSVLALLFAVCAPLRLQA) form the signal peptide. The Extracellular segment spans residues 26–250 (EELGDGCGHI…FTTPGMNITT (225 aa)). Cystine bridges form between cysteine 32/cysteine 59, cysteine 85/cysteine 103, cysteine 149/cysteine 165, and cysteine 169/cysteine 191. The CUB domain maps to 32–141 (CGHIVTSQDS…RGFLLTYASS (110 aa)). Asparagine 55 carries an N-linked (GlcNAc...) asparagine glycan. Positions 143–239 (HPDLITCLER…RHGSLSEKRF (97 aa)) constitute an LCCL domain. N-linked (GlcNAc...) asparagine glycosylation is present at asparagine 247. Residues 251–271 (VAIPSVIFIALLLTGMGIFAI) traverse the membrane as a helical segment. The Cytoplasmic portion of the chain corresponds to 272–503 (CRKRKKKGNP…LNQTAMTALL (232 aa)). Phosphoserine is present on serine 305. Residue threonine 406 is modified to Phosphothreonine. The tract at residues 410–503 (QSGYRVPGPR…LNQTAMTALL (94 aa)) is disordered. Polar residues predominate over residues 494–503 (LNQTAMTALL).

The protein resides in the membrane. This is Discoidin, CUB and LCCL domain-containing protein 1 (Dcbld1) from Mus musculus (Mouse).